The sequence spans 217 residues: Probable GTP-binding protein EngB (217 aa).

Positions 44-217 (DRIEVCFAGR…TLRTIVATLG (174 aa)) constitute an EngB-type G domain. Residues 52–59 (GRSNVGKS), 79–83 (GRTQE), 97–100 (DLPG), 164–167 (TKAD), and 198–200 (TSS) each bind GTP. Residues S59 and T81 each contribute to the Mg(2+) site.

The protein belongs to the TRAFAC class TrmE-Era-EngA-EngB-Septin-like GTPase superfamily. EngB GTPase family. Requires Mg(2+) as cofactor.

Necessary for normal cell division and for the maintenance of normal septation. This Cereibacter sphaeroides (strain ATCC 17023 / DSM 158 / JCM 6121 / CCUG 31486 / LMG 2827 / NBRC 12203 / NCIMB 8253 / ATH 2.4.1.) (Rhodobacter sphaeroides) protein is Probable GTP-binding protein EngB.